A 242-amino-acid chain; its full sequence is Phosphoribosylaminoimidazole-succinocarboxamide synthase (242 aa).

It belongs to the SAICAR synthetase family.

The enzyme catalyses 5-amino-1-(5-phospho-D-ribosyl)imidazole-4-carboxylate + L-aspartate + ATP = (2S)-2-[5-amino-1-(5-phospho-beta-D-ribosyl)imidazole-4-carboxamido]succinate + ADP + phosphate + 2 H(+). It participates in purine metabolism; IMP biosynthesis via de novo pathway; 5-amino-1-(5-phospho-D-ribosyl)imidazole-4-carboxamide from 5-amino-1-(5-phospho-D-ribosyl)imidazole-4-carboxylate: step 1/2. The sequence is that of Phosphoribosylaminoimidazole-succinocarboxamide synthase from Magnetococcus marinus (strain ATCC BAA-1437 / JCM 17883 / MC-1).